Consider the following 224-residue polypeptide: ATP synthase subunit a (224 aa).

6 helical membrane-spanning segments follow: residues 17-37 (FSLN…IYWL), 72-92 (IFIS…FPYI), 99-119 (LTLT…YGWI), 125-145 (MFAH…MVCI), 166-186 (IAGH…SYIL), and 187-207 (VTFL…VAMI).

It belongs to the ATPase A chain family. In terms of assembly, F-type ATPases have 2 components, CF(1) - the catalytic core - and CF(0) - the membrane proton channel. CF(1) has five subunits: alpha(3), beta(3), gamma(1), delta(1), epsilon(1). CF(0) has three main subunits: a, b and c.

It localises to the mitochondrion inner membrane. Its function is as follows. Mitochondrial membrane ATP synthase (F(1)F(0) ATP synthase or Complex V) produces ATP from ADP in the presence of a proton gradient across the membrane which is generated by electron transport complexes of the respiratory chain. F-type ATPases consist of two structural domains, F(1) - containing the extramembraneous catalytic core and F(0) - containing the membrane proton channel, linked together by a central stalk and a peripheral stalk. During catalysis, ATP synthesis in the catalytic domain of F(1) is coupled via a rotary mechanism of the central stalk subunits to proton translocation. Key component of the proton channel; it may play a direct role in the translocation of protons across the membrane. The chain is ATP synthase subunit a (mt:ATPase6) from Drosophila melanogaster (Fruit fly).